The sequence spans 720 residues: Engulfment and cell motility protein 2 (720 aa).

Position 48 is a phosphotyrosine (Y48). In terms of domain architecture, ELMO spans 310 to 484 (QAQRDIIFEL…QVVREQITRA (175 aa)). S503 carries the post-translational modification Phosphoserine. One can recognise a PH domain in the interval 553–674 (SSFRKIGNRR…LLGKDMSSEL (122 aa)). The SH3-binding signature appears at 700–707 (PEAPPPVP). Position 717 is a phosphotyrosine (Y717).

Interacts directly with the SH3-domain of DOCK1 via its SH3-binding site. Probably forms a heterotrimeric complex with DOCK1 and RAC1. Interacts with ARHGEF16, DOCK4 and EPHA2; mediates activation of RAC1 by EPHA2. Interacts with ADGRB3. Interacts with AUTS2; the interaction is direct.

Its subcellular location is the cytoplasm. The protein localises to the cytosol. It localises to the membrane. Its function is as follows. Involved in cytoskeletal rearrangements required for phagocytosis of apoptotic cells and cell motility. Acts in association with DOCK1 and CRK. Was initially proposed to be required in complex with DOCK1 to activate Rac Rho small GTPases. May enhance the guanine nucleotide exchange factor (GEF) activity of DOCK1. This Bos taurus (Bovine) protein is Engulfment and cell motility protein 2 (ELMO2).